Here is a 694-residue protein sequence, read N- to C-terminus: MADSYDLTAIRNIGIMAHIDAGKTTTTERILFYSGRVHKMGEVDKGTATMDWMSQEQERGITITSAATACKWKGYFVNIIDTPGHVDFTVEVERSLRVLDGSIGIFCAVAGVQPQSETVWRQADRYHVPRIAYINKMDRVGADFFRVIEMIRKNLSSDAVAIQLPIGVEEAFSGIIDLIDFKAYIYEDESGEQYQERELNPDERSKAQEFRNLLLERLAEYDDSILEKYLEAREISPAEIRSSLRKSCISNQIVPVLCGSSFKNKGVQMLLDAVVSYLPSPLDIPAIEAMDIASGENVRIKPEVDAPLCALAFKLASDPYVGKLTYFRIYSGRIKAGSTLFNSRQDRKERFTRLLKMHANHREEIEEACAGDIVAGVGLKNTATGDTLCSENHLVLLETIDFPQPVIDVAIEAKTRADQERIEESLRRLAEEDPTFQTRQDKESGQMIISGMGELHLEIIIDRLLKEFKVNANIGKPQVAYKESVKKRTAAEVKFDRQAGGRGQYAHVVLEVLPLAEGQGKRFADKSSPEAIPREFIPAVEMGVREALQAGILGGYPVDDVEVVLKGGSYHEVDSNEPAFKIAASMALKEALENAQSVFLEPVMDLEIICPEEYLGDVISDLNARRGRIIALEENRDTKAVKGLVPLAETFGYATSLRSLTQGRASFSMKIKNFAEVPESKSREIIARRYGLPV.

Residues 8–282 (TAIRNIGIMA…AVVSYLPSPL (275 aa)) form the tr-type G domain. GTP-binding positions include 17–24 (AHIDAGKT), 81–85 (DTPGH), and 135–138 (NKMD).

Belongs to the TRAFAC class translation factor GTPase superfamily. Classic translation factor GTPase family. EF-G/EF-2 subfamily.

It localises to the cytoplasm. Its function is as follows. Catalyzes the GTP-dependent ribosomal translocation step during translation elongation. During this step, the ribosome changes from the pre-translocational (PRE) to the post-translocational (POST) state as the newly formed A-site-bound peptidyl-tRNA and P-site-bound deacylated tRNA move to the P and E sites, respectively. Catalyzes the coordinated movement of the two tRNA molecules, the mRNA and conformational changes in the ribosome. This is Elongation factor G 2 from Syntrophomonas wolfei subsp. wolfei (strain DSM 2245B / Goettingen).